We begin with the raw amino-acid sequence, 269 residues long: Zinc import ATP-binding protein ZnuC (269 aa).

Residues 6–221 (VRLTQVGVSF…PAFVELFGQD (216 aa)) form the ABC transporter domain. 38–45 (GPNGAGKT) provides a ligand contact to ATP.

The protein belongs to the ABC transporter superfamily. Zinc importer (TC 3.A.1.15.5) family. As to quaternary structure, the complex is composed of two ATP-binding proteins (ZnuC), two transmembrane proteins (ZnuB) and a solute-binding protein (ZnuA).

It localises to the cell inner membrane. It carries out the reaction Zn(2+)(out) + ATP(in) + H2O(in) = Zn(2+)(in) + ADP(in) + phosphate(in) + H(+)(in). In terms of biological role, part of the ABC transporter complex ZnuABC involved in zinc import. Responsible for energy coupling to the transport system. The chain is Zinc import ATP-binding protein ZnuC from Pseudomonas aeruginosa (strain UCBPP-PA14).